Here is a 270-residue protein sequence, read N- to C-terminus: Putative phosphoenolpyruvate synthase regulatory protein (270 aa).

150–157 lines the ADP pocket; it reads GVSRCGKT.

It belongs to the pyruvate, phosphate/water dikinase regulatory protein family. PSRP subfamily.

It carries out the reaction [pyruvate, water dikinase] + ADP = [pyruvate, water dikinase]-phosphate + AMP + H(+). It catalyses the reaction [pyruvate, water dikinase]-phosphate + phosphate + H(+) = [pyruvate, water dikinase] + diphosphate. Functionally, bifunctional serine/threonine kinase and phosphorylase involved in the regulation of the phosphoenolpyruvate synthase (PEPS) by catalyzing its phosphorylation/dephosphorylation. This Aeromonas salmonicida (strain A449) protein is Putative phosphoenolpyruvate synthase regulatory protein.